The sequence spans 98 residues: Large ribosomal subunit protein bL21 (98 aa).

The protein belongs to the bacterial ribosomal protein bL21 family. Part of the 50S ribosomal subunit. Contacts protein L20.

In terms of biological role, this protein binds to 23S rRNA in the presence of protein L20. This Novosphingobium aromaticivorans (strain ATCC 700278 / DSM 12444 / CCUG 56034 / CIP 105152 / NBRC 16084 / F199) protein is Large ribosomal subunit protein bL21.